Reading from the N-terminus, the 361-residue chain is Phospho-N-acetylmuramoyl-pentapeptide-transferase (361 aa).

10 helical membrane passes run 28–48 (LAVLVTLSLSFLIGPRLIKFL), 74–94 (TMGGIMIILSSCFSTLLLADL), 99–119 (IWITLFGFVSFSIIGFLDDYA), 135–155 (LLLQGIISLIVCILLEYTIDS), 167–187 (SLSMDLGYLYIFFAIFVIVGA), 203–223 (VPIALTAGSFALISYLVGNLI), 236–256 (TGELTIFCASIVGSCLGFLWF), 263–283 (VFMGDTGSLSLGGVLGIISVI), 288–308 (IVLGIVGGLFVIETISVIMQV), and 338–358 (KVVIRFWIISLIFVLIGLSSL).

This sequence belongs to the glycosyltransferase 4 family. MraY subfamily. The cofactor is Mg(2+).

The protein localises to the cell inner membrane. The enzyme catalyses UDP-N-acetyl-alpha-D-muramoyl-L-alanyl-gamma-D-glutamyl-meso-2,6-diaminopimeloyl-D-alanyl-D-alanine + di-trans,octa-cis-undecaprenyl phosphate = di-trans,octa-cis-undecaprenyl diphospho-N-acetyl-alpha-D-muramoyl-L-alanyl-D-glutamyl-meso-2,6-diaminopimeloyl-D-alanyl-D-alanine + UMP. Its pathway is cell wall biogenesis; peptidoglycan biosynthesis. Functionally, catalyzes the initial step of the lipid cycle reactions in the biosynthesis of the cell wall peptidoglycan: transfers peptidoglycan precursor phospho-MurNAc-pentapeptide from UDP-MurNAc-pentapeptide onto the lipid carrier undecaprenyl phosphate, yielding undecaprenyl-pyrophosphoryl-MurNAc-pentapeptide, known as lipid I. The protein is Phospho-N-acetylmuramoyl-pentapeptide-transferase of Rickettsia bellii (strain OSU 85-389).